Reading from the N-terminus, the 433-residue chain is Histone acetyltransferase type B subunit 2 (433 aa).

WD repeat units lie at residues Asn134–Ser174, Gly187–Asn227, Gly237–Lys277, Ala282–His322, and Ser326–Thr366. Residues Asp368 to Asp372 form an interaction with the histone H4 N-terminus region. One copy of the WD 6 repeat lies at Gly383–Glu433.

The protein belongs to the WD repeat RBAP46/RBAP48/MSI1 family. In terms of assembly, component of the HAT-B complex composed of at least HAT1 and HAT2. The HAT-B complex binds to histone H4 tail.

It is found in the cytoplasm. The protein localises to the nucleus. Functionally, regulatory subunit of the histone acetylase B (HAT-B) complex. The complex acetylates 'Lys-12' of histone H4 which is required for telomeric silencing. The chain is Histone acetyltransferase type B subunit 2 (HAT2) from Mycosarcoma maydis (Corn smut fungus).